We begin with the raw amino-acid sequence, 614 residues long: Zinc metalloproteinase-disintegrin-like protein F1 (614 aa).

The N-terminal stretch at 1–20 (MLQVLLVTICLAVFPYQGSS) is a signal peptide. Positions 21 to 192 (IILESGNVND…IKASQFILTP (172 aa)) are excised as a propeptide. Residues 167-173 (PKKCGVT) carry the Cys-switch; controls maturation motif. Glutamate 193 carries the post-translational modification Pyrrolidone carboxylic acid (Glu). Residues 202–398 (KYIKLAIVVD…HTPRCILNEP (197 aa)) form the Peptidase M12B domain. Asparagine 221 is a glycosylation site (N-linked (GlcNAc...) asparagine). Disulfide bonds link cysteine 313-cysteine 393, cysteine 353-cysteine 377, and cysteine 355-cysteine 360. Residue histidine 338 coordinates Zn(2+). Positions 338–349 (HELGHNLGINHD) match the Metal-binding motif. Glutamate 339 serves as the catalytic Proton acceptor. Histidine 342 and histidine 348 together coordinate Zn(2+). Residues 406-492 (PAVCGNYVVE…ECPMDHIQKN (87 aa)) form the Disintegrin domain. Ca(2+) is bound by residues valine 408, asparagine 411, glutamate 415, glutamate 418, and aspartate 421. 14 cysteine pairs are disulfide-bonded: cysteine 409–cysteine 438, cysteine 420–cysteine 433, cysteine 422–cysteine 428, cysteine 432–cysteine 455, cysteine 446–cysteine 452, cysteine 451–cysteine 477, cysteine 464–cysteine 484, cysteine 471–cysteine 503, cysteine 496–cysteine 508, cysteine 515–cysteine 565, cysteine 530–cysteine 575, cysteine 543–cysteine 553, cysteine 560–cysteine 601, and cysteine 595–cysteine 607. Residues 470–472 (ECD) carry the D/ECD-tripeptide motif. Residues aspartate 472, glutamate 475, and aspartate 487 each coordinate Ca(2+). N-linked (GlcNAc...) asparagine glycosylation occurs at asparagine 534.

It belongs to the venom metalloproteinase (M12B) family. P-III subfamily. P-IIIa sub-subfamily. As to quaternary structure, monomer. It depends on Zn(2+) as a cofactor. Post-translationally, N-glycosylated. The N-terminus is blocked. Expressed by the venom gland (at protein level). Expressed by the venom gland.

Its subcellular location is the secreted. Its activity is regulated as follows. The alpha-fibrinogenase activity is inhibited by EDTA, but not by pefabloc. Zinc metalloprotease that has fibrinogenolytic activity. Does not have hemorrhagic activity in rats. Cleaves insulin B chain at '38-Ala-|-Leu-39' and '40-Tyr-|-Leu-41' bonds. Hydrolyzes only partially and weakly isolated extracellular matrix (ECM) bovine fibronectin and basal membrane (BM) protein human collagen IV in vitro. Murine laminin is not hydrolyzed, neither isolated nor in a solubilized BM preparation. Nidogen is hydrolyzed at '350-Ser-|-Phe-351' bond in a solubilized BM preparation. Hydrolyzes plasma proteins involved in blood coagulation in vitro. Has alpha-fibrinogenase activity cleaving human fibrinogen alpha chain at '432-Lys-|-Leu-433' bond, but does not cleave beta or gamma chains. Does not cleave fibrin. Hydrolyzes only partially bovine prothrombin at '200-Ser-|-Gly-201' bond, factor X (FX) heavy chain, and very slowly, FX light chain and plasminogen in vitro, without activating any of them. Has no effect in plasma thrombin generation. Does not inhibit platelet aggregation induced by collagen in vitro. May have a delayed pathological action as an anticoagulant in envenomed patients after they received serotherapy as it is not recognized by the venom antiserum. In Vipera ammodytes ammodytes (Western sand viper), this protein is Zinc metalloproteinase-disintegrin-like protein F1.